A 286-amino-acid chain; its full sequence is Small ribosomal subunit protein uS2 (286 aa).

A disordered region spans residues 257–286 (KDNKSNKSNTINADENIKESDLIGGSNNEG).

This sequence belongs to the universal ribosomal protein uS2 family.

This chain is Small ribosomal subunit protein uS2, found in Ehrlichia ruminantium (strain Gardel).